The chain runs to 426 residues: Inhibin beta A chain (426 aa).

An N-terminal signal peptide occupies residues 1-20; it reads MPLLWLRGFLLASCWIIVKS. The propeptide occupies 21 to 310; that stretch reads SPTPGSEGHS…EDHPHRRRRR (290 aa). A glycan (N-linked (GlcNAc...) asparagine) is linked at N165. Residues 177–186 are compositionally biased toward polar residues; the sequence is QQQKHPQGSS. Disordered stretches follow at residues 177–201 and 260–291; these read QQQK…MEER and KKKK…SHRP. The span at 263-275 shows a compositional bias: basic and acidic residues; sequence KEEEGEGKKKDGG. Cystine bridges form between C314–C322, C321–C391, C350–C423, and C354–C425.

Belongs to the TGF-beta family. As to quaternary structure, dimeric, linked by one or more disulfide bonds. Inhibin A is a dimer of alpha/INHA and beta-A/INHBA. Activin A is a homodimer of beta-A/INHBA. Activin AB is a dimer of beta-A/INHBA and beta-B/INHBB. Interacts with FST and FSTL3; these interactions prevent activin A interaction to its type II receptor. Activin A interacts with ACVR2A. Activin A interacts with BMPR2. Inhibin A interacts with ACVR1; this interaction creates a non-signaling complex (NSC) that inhibits ACVR1-mediated BMP signaling. Inhibin A interacts with ACVR2A.

It is found in the secreted. In terms of biological role, inhibins/activins are involved in regulating a number of diverse functions such as hypothalamic and pituitary hormone secretion, gonadal hormone secretion, germ cell development and maturation, erythroid differentiation, insulin secretion, nerve cell survival, embryonic axial development or bone growth, depending on their subunit composition. Activin A is a homodimer of INHBA that plays a role in several essential biological processes including embryonic development, stem cell maintenance and differentiation, haematopoiesis, cell proliferation and tissue fibrosis. Signals through type I (such as ACVR1B or ACVR1C) and type II receptors (such as ACVR2A, ACVR2B or BMPR2) which, upon ligand binding, phosphorylate SMAD2 and SMAD3 intracellular signaling mediators that form a complex with SMAD4, translocate to the nucleus and modulate gene expression. Can also activate alternative non-canonical intracellular signaling pathways including the p38 MAPK, extracellular signal-regulated kinases 1/2 (ERK1/2) and c-Jun N-terminal kinases (JNKs) to modulate cell migration and differentiation. Alternatively, promotes osteoblastic differentiation via ACVRL1-SMAD1/5/9 pathway. In addition, can engage the type I receptor ACVR1 to form an ACVR1-activin A-type II receptor non-signaling complex (NSC) that renders receptors unavailable for engagement with BMPs, hence resulting in an apparent inhibition of ACVR1-mediated BMP signaling. Functionally, inhibin A is a dimer of alpha/INHA and beta-A/INHBA that functions as a feedback regulator in the hypothalamic-pituitary-gonadal (HPG) axis. Inhibits the secretion of FSH from the anterior pituitary gland by acting on pituitary gonadotrope cells. Antagonizes activin A by binding to the proteoglycan, betaglycan, and forming a stable complex with and, thereby, sequestering type II activin receptors while excluding type I receptor. This Equus caballus (Horse) protein is Inhibin beta A chain (INHBA).